We begin with the raw amino-acid sequence, 141 residues long: Large ribosomal subunit protein uL11 (141 aa).

It belongs to the universal ribosomal protein uL11 family. Part of the ribosomal stalk of the 50S ribosomal subunit. Interacts with L10 and the large rRNA to form the base of the stalk. L10 forms an elongated spine to which L12 dimers bind in a sequential fashion forming a multimeric L10(L12)X complex. One or more lysine residues are methylated.

Its function is as follows. Forms part of the ribosomal stalk which helps the ribosome interact with GTP-bound translation factors. The polypeptide is Large ribosomal subunit protein uL11 (Thermotoga petrophila (strain ATCC BAA-488 / DSM 13995 / JCM 10881 / RKU-1)).